Consider the following 529-residue polypeptide: MMITSAVVLYLLLLSHQTVSEEQVQQFVIGEKGNNTTLHCLDHPVNASSVLYQWKKDGAVVATQNPPNPSVHLSISENGFLRISGLQLIDEGLYECESQAKGGRSWQTLSKIQLTIAAGPTGVSLDISPATFLNNGTLFVHKGSNVNFSCSSESNPSQNLTWTVDNLASDNPEREFGSKSPLAFSITNIQPLDQGTYTCTSQNTLSRRTANKTQELLVYYAPERHPECSWELGDKPSDVLFICSWFGGYPVPTLTWQEVEGAAEGPTINLTTSQQTEELNVSVNRSILHDGDKVKCTGHHVTGVEKSCSFTLKIPYPTGQPLATALEGTNITISCTETSSLPPAKTVWKKNDDLIENTSKYIVQENRPALTLTIVNVTKADEGVYYCYSENPLGARELEVYLNVKTSAGNGGAIVGIFVSVLVMMIGIVVGVTVYTKRDRICIGLRFSQLDDDRVDVLSLVDSDEEEIFHEAVPRLPPVTNGHATTLVEIHRIPSCDHEDIADSTEQSDQTRANLTEAGPQRAELQPAV.

A signal peptide spans 1-18 (MMITSAVVLYLLLLSHQT). Ig-like C2-type domains are found at residues 19 to 110 (VSEE…QTLS) and 129 to 217 (PATF…QELL). Residues 21–411 (EEQVQQFVIG…LNVKTSAGNG (391 aa)) lie on the Extracellular side of the membrane. 13 N-linked (GlcNAc...) asparagine glycosylation sites follow: Asn-34, Asn-35, Asn-46, Asn-135, Asn-147, Asn-159, Asn-211, Asn-269, Asn-280, Asn-284, Asn-330, Asn-357, and Asn-376. Cys-40 and Cys-96 form a disulfide bridge. Cys-150 and Cys-199 form a disulfide bridge. Residues 317-403 (PTGQPLATAL…GARELEVYLN (87 aa)) form the Ig-like C2-type 3 domain. Cys-335 and Cys-387 are oxidised to a cystine. The helical transmembrane segment at 412–432 (GAIVGIFVSVLVMMIGIVVGV) threads the bilayer. At 433–529 (TVYTKRDRIC…PQRAELQPAV (97 aa)) the chain is on the cytoplasmic side.

It is found in the membrane. This Danio rerio (Zebrafish) protein is V-set and immunoglobulin domain-containing protein 10 (vsig10).